The sequence spans 415 residues: Adenylosuccinate synthetase (415 aa).

Residues 11–17 (GDEGKGK) and 39–41 (GHT) each bind GTP. Catalysis depends on aspartate 12, which acts as the Proton acceptor. 2 residues coordinate Mg(2+): aspartate 12 and glycine 39. IMP contacts are provided by residues 12–15 (DEGK), 37–40 (NAGH), threonine 124, arginine 138, glutamine 218, threonine 233, and arginine 297. Histidine 40 (proton donor) is an active-site residue. Residue 293 to 299 (TTTGRAR) coordinates substrate. Residues arginine 299, 325 to 327 (KLD), and 403 to 405 (STS) contribute to the GTP site.

This sequence belongs to the adenylosuccinate synthetase family. In terms of assembly, homodimer. Mg(2+) serves as cofactor.

The protein resides in the cytoplasm. It catalyses the reaction IMP + L-aspartate + GTP = N(6)-(1,2-dicarboxyethyl)-AMP + GDP + phosphate + 2 H(+). Its pathway is purine metabolism; AMP biosynthesis via de novo pathway; AMP from IMP: step 1/2. Functionally, plays an important role in the de novo pathway of purine nucleotide biosynthesis. Catalyzes the first committed step in the biosynthesis of AMP from IMP. This is Adenylosuccinate synthetase from Helicobacter hepaticus (strain ATCC 51449 / 3B1).